The chain runs to 438 residues: Diaminopimelate decarboxylase (438 aa).

The residue at position 73 (Lys73) is an N6-(pyridoxal phosphate)lysine. Residues Ser217, Gly254, and 294 to 297 (EPGR) each bind pyridoxal 5'-phosphate. Positions 297, 333, and 337 each coordinate substrate. The active-site Proton donor is Cys362. Substrate-binding residues include Glu363 and Tyr391. A pyridoxal 5'-phosphate-binding site is contributed by Tyr391.

The protein belongs to the Orn/Lys/Arg decarboxylase class-II family. LysA subfamily. In terms of assembly, homodimer. It depends on pyridoxal 5'-phosphate as a cofactor.

It catalyses the reaction meso-2,6-diaminopimelate + H(+) = L-lysine + CO2. It functions in the pathway amino-acid biosynthesis; L-lysine biosynthesis via DAP pathway; L-lysine from DL-2,6-diaminopimelate: step 1/1. Competitively inhibited by the substrate analog azelaic acid in vitro but not in vivo. In terms of biological role, specifically catalyzes the decarboxylation of meso-diaminopimelate (meso-DAP) to L-lysine. The sequence is that of Diaminopimelate decarboxylase from Methanocaldococcus jannaschii (strain ATCC 43067 / DSM 2661 / JAL-1 / JCM 10045 / NBRC 100440) (Methanococcus jannaschii).